Reading from the N-terminus, the 68-residue chain is Elastase inhibitor AFLEI (68 aa).

A disulfide bond links C5 and C67.

The protein localises to the secreted. Its function is as follows. Elastase inhibitor. Inhibitor of A.flavus elastase with a Ki of 40 nM. Inhibitor of A.fumigatus elastase and human leukocyte elastase. Inhibits the fibrinogenase and collagenase activities of A.flavus elastase. Does not inhibit porcine pancreatic elastase, trypsin, chymotrypsin, thrombin or A.acutus AC1-proteinase. In Aspergillus flavus, this protein is Elastase inhibitor AFLEI.